The chain runs to 151 residues: Large ribosomal subunit protein bL9 (151 aa).

The protein belongs to the bacterial ribosomal protein bL9 family.

Its function is as follows. Binds to the 23S rRNA. The polypeptide is Large ribosomal subunit protein bL9 (Dehalococcoides mccartyi (strain ATCC BAA-2266 / KCTC 15142 / 195) (Dehalococcoides ethenogenes (strain 195))).